We begin with the raw amino-acid sequence, 98 residues long: Integration host factor subunit alpha (98 aa).

This sequence belongs to the bacterial histone-like protein family. As to quaternary structure, heterodimer of an alpha and a beta chain.

Functionally, this protein is one of the two subunits of integration host factor, a specific DNA-binding protein that functions in genetic recombination as well as in transcriptional and translational control. The polypeptide is Integration host factor subunit alpha (Glaesserella parasuis serovar 5 (strain SH0165) (Haemophilus parasuis)).